Consider the following 304-residue polypeptide: Voltage-dependent anion channel-forming protein YneE (304 aa).

The next 4 membrane-spanning stretches (helical) occupy residues 28–48, 50–70, 194–214, and 220–240; these read LLLN…YTHL, IKFT…FLGF, VLAG…TLIL, and LFCI…TPFI.

Belongs to the anion channel-forming bestrophin (TC 1.A.46) family.

It localises to the cell membrane. This is Voltage-dependent anion channel-forming protein YneE (yneE) from Escherichia coli O157:H7.